The primary structure comprises 91 residues: MFATSILRSAYPAYKSPYGPKYQYQPHIDGITPKQLVRILPTAAAWTGVALFAVVYYASGIPRLRRDVLQRIPYLGERYFVNEIPASDNPF.

Topologically, residues Met-1–Lys-34 are mitochondrial matrix. The chain crosses the membrane as a helical span at residues Gln-35–Ala-58. Topologically, residues Ser-59 to Phe-91 are mitochondrial intermembrane.

This sequence belongs to the UQCR11/QCR10 family. In terms of assembly, component of the ubiquinol-cytochrome c oxidoreductase (cytochrome b-c1 complex, complex III, CIII), a multisubunit enzyme composed of 10 subunits. The complex is composed of 3 respiratory subunits cytochrome b (cob), cytochrome c1 (cyt-1) and Rieske protein (fes-1), 2 core protein subunits pep and ucr-1, and 5 low-molecular weight protein subunits qcr6, qcr7, qcr8, qcr9 and probably NCU16844/qcr10. The complex exists as an obligatory dimer and forms supercomplexes (SCs) in the inner mitochondrial membrane with NADH-ubiquinone oxidoreductase (complex I, CI) and cytochrome c oxidase (complex IV, CIV), resulting in different assemblies (supercomplexes SCI(1)III(2), SCIII(2)IV(1) and SCIII(2)IV(2) as well as higher order I(x)III(y)IV(z) megacomplexes).

The protein localises to the mitochondrion inner membrane. Component of the ubiquinol-cytochrome c oxidoreductase, a multisubunit transmembrane complex that is part of the mitochondrial electron transport chain which drives oxidative phosphorylation. The respiratory chain contains 3 multisubunit complexes succinate dehydrogenase (complex II, CII), ubiquinol-cytochrome c oxidoreductase (cytochrome b-c1 complex, complex III, CIII) and cytochrome c oxidase (complex IV, CIV), that cooperate to transfer electrons derived from NADH and succinate to molecular oxygen, creating an electrochemical gradient over the inner membrane that drives transmembrane transport and the ATP synthase. The cytochrome b-c1 complex catalyzes electron transfer from ubiquinol to cytochrome c, linking this redox reaction to translocation of protons across the mitochondrial inner membrane, with protons being carried across the membrane as hydrogens on the quinol. In the process called Q cycle, 2 protons are consumed from the matrix, 4 protons are released into the intermembrane space and 2 electrons are passed to cytochrome c. The chain is Cytochrome b-c1 complex subunit 10, mitochondrial from Neurospora crassa (strain ATCC 24698 / 74-OR23-1A / CBS 708.71 / DSM 1257 / FGSC 987).